The chain runs to 847 residues: Putative disease resistance RPP13-like protein 3 (847 aa).

Residues 24-41 are a coiled coil; the sequence is LMGVKDDLEELKTELTCI. The region spanning 143 to 453 is the NB-ARC domain; the sequence is TNVRVRQLRR…AEGFIQEDEE (311 aa). 192–199 provides a ligand contact to ATP; the sequence is GMGGLGKT.

Belongs to the disease resistance NB-LRR family. RPP13 subfamily.

In terms of biological role, potential disease resistance protein. In Arabidopsis thaliana (Mouse-ear cress), this protein is Putative disease resistance RPP13-like protein 3 (RPP13L3).